A 242-amino-acid chain; its full sequence is Interleukin-34 (242 aa).

An N-terminal signal peptide occupies residues 1–20 (MPRGFTWLRYLGIFLGVALG). The N-linked (GlcNAc...) asparagine glycan is linked to asparagine 76. The interval 210-242 (TQLYPPPPWSPSSPPHSTGSVRPVRAQGEGLLP) is disordered. Positions 213 to 223 (YPPPPWSPSSP) are enriched in pro residues.

The protein belongs to the IL-34 family. As to quaternary structure, homodimer. Interacts with CSF1R. As to expression, detected in the sinusoidal epithelium in the red pulp of spleen (at protein level). Predominantly expressed in spleen. Also detected in a range of other tissues including heart, brain, lung, liver, kidney, thymus, testis, ovary, small intestine, prostate and colon.

The protein resides in the secreted. Functionally, cytokine that promotes the proliferation, survival and differentiation of monocytes and macrophages. Promotes the release of pro-inflammatory chemokines, and thereby plays an important role in innate immunity and in inflammatory processes. Plays an important role in the regulation of osteoclast proliferation and differentiation, and in the regulation of bone resorption. Signaling via CSF1R and its downstream effectors stimulates phosphorylation of MAPK1/ERK2 AND MAPK3/ERK1. This is Interleukin-34 (IL34) from Homo sapiens (Human).